A 302-amino-acid polypeptide reads, in one-letter code: Heme A synthase (302 aa).

Residues 1-6 (MNKALK) are Cytoplasmic-facing. A helical membrane pass occupies residues 7-27 (GLGIITTIAMLFVLIGGALVT). Topologically, residues 28–61 (KTGSGMGCGRSWPLCNGSIFPALTLESIIEWSHR) are extracellular. A disulfide bridge links C35 with C42. The active site involves E57. Heme o is bound at residue H60. Residues 62–82 (FVSGTSGVLVLALAIWTWKKI) form a helical membrane-spanning segment. Residues 83–91 (GHIRETKFL) lie on the Cytoplasmic side of the membrane. A helical membrane pass occupies residues 92–112 (AVMSVVFLILQALLGAAAVVF). At 113-120 (GSSALIMA) the chain is on the extracellular side. Residues 121 to 141 (LHFGISLISFASVLLLTLLVF) traverse the membrane as a helical segment. H122 is a binding site for heme o. The Cytoplasmic portion of the chain corresponds to 142–158 (EADSKQKSESFYIGKTM). The chain crosses the membrane as a helical span at residues 159–179 (QFHMIGIIIYTYVVVYTGAYV). At 180-208 (RHTSSSLACLDFPMCSTENGWLPGKFHEW) the chain is on the extracellular side. A disulfide bond links C188 and C194. Residues 209–229 (VQMGHRAAALLLFAWIIAAAV) form a helical membrane-spanning segment. Residue H213 participates in heme b binding. Topologically, residues 230–242 (HAARQYKNQKRIY) are cytoplasmic. A helical transmembrane segment spans residues 243-263 (WGWMISLILIILQAASGIAVV). The Extracellular segment spans residues 264-272 (YSRLDLGFA). The helical transmembrane segment at 273–293 (LAHAFFISCLFGILCYFLLLV) threads the bilayer. H275 provides a ligand contact to heme b. Over 294–302 (ARYRRQVQK) the chain is Cytoplasmic.

This sequence belongs to the COX15/CtaA family. Type 1 subfamily. Interacts with CtaB. Heme b is required as a cofactor.

It is found in the cell membrane. It carries out the reaction Fe(II)-heme o + 2 A + H2O = Fe(II)-heme a + 2 AH2. It functions in the pathway porphyrin-containing compound metabolism; heme A biosynthesis; heme A from heme O: step 1/1. Catalyzes the conversion of heme O to heme A by two successive hydroxylations of the methyl group at C8. The first hydroxylation forms heme I, the second hydroxylation results in an unstable dihydroxymethyl group, which spontaneously dehydrates, resulting in the formyl group of heme A. The sequence is that of Heme A synthase from Bacillus licheniformis (strain ATCC 14580 / DSM 13 / JCM 2505 / CCUG 7422 / NBRC 12200 / NCIMB 9375 / NCTC 10341 / NRRL NRS-1264 / Gibson 46).